We begin with the raw amino-acid sequence, 298 residues long: Lipoyl synthase (298 aa).

[4Fe-4S] cluster-binding residues include C43, C48, C54, C69, C73, C76, and S280. The Radical SAM core domain maps to 55–269 (FSSGTATFLI…AACGRGMGIP (215 aa)).

It belongs to the radical SAM superfamily. Lipoyl synthase family. Requires [4Fe-4S] cluster as cofactor.

The protein resides in the cytoplasm. The enzyme catalyses [[Fe-S] cluster scaffold protein carrying a second [4Fe-4S](2+) cluster] + N(6)-octanoyl-L-lysyl-[protein] + 2 oxidized [2Fe-2S]-[ferredoxin] + 2 S-adenosyl-L-methionine + 4 H(+) = [[Fe-S] cluster scaffold protein] + N(6)-[(R)-dihydrolipoyl]-L-lysyl-[protein] + 4 Fe(3+) + 2 hydrogen sulfide + 2 5'-deoxyadenosine + 2 L-methionine + 2 reduced [2Fe-2S]-[ferredoxin]. It participates in protein modification; protein lipoylation via endogenous pathway; protein N(6)-(lipoyl)lysine from octanoyl-[acyl-carrier-protein]: step 2/2. Its function is as follows. Catalyzes the radical-mediated insertion of two sulfur atoms into the C-6 and C-8 positions of the octanoyl moiety bound to the lipoyl domains of lipoate-dependent enzymes, thereby converting the octanoylated domains into lipoylated derivatives. This Nitratidesulfovibrio vulgaris (strain DP4) (Desulfovibrio vulgaris) protein is Lipoyl synthase.